The chain runs to 155 residues: Egg cell-secreted protein 1.5 (155 aa).

A signal peptide spans 1 to 32 (MATKSTSKPLLLSFLMMSYLISTFHVITVAEG).

This sequence belongs to the plant egg cell-secreted peptide family. Restricted to female reproductive tissues, specifically accumulating in storage vesicles of the unfertilized egg cell.

It localises to the cytoplasmic vesicle. Its subcellular location is the secreted. Functionally, involved in the regulation of gamete interactions during the double fertilization and to prevent multiple-pollen tube attraction; mediates the redistribution of the gamete fusogen HAP2/GCS1 to the cell surface after secretion upon sperm arrival. The sequence is that of Egg cell-secreted protein 1.5 (EC1.5) from Arabidopsis thaliana (Mouse-ear cress).